The primary structure comprises 271 residues: Probable ribosomal RNA small subunit methyltransferase A (271 aa).

His19, Leu21, Gly46, Glu67, Asp92, and Asn107 together coordinate S-adenosyl-L-methionine.

Belongs to the class I-like SAM-binding methyltransferase superfamily. rRNA adenine N(6)-methyltransferase family. RsmA subfamily.

It is found in the cytoplasm. Specifically dimethylates two adjacent adenosines in the loop of a conserved hairpin near the 3'-end of 16S rRNA in the 30S particle. May play a critical role in biogenesis of 30S subunits. The polypeptide is Probable ribosomal RNA small subunit methyltransferase A (Methanosarcina mazei (strain ATCC BAA-159 / DSM 3647 / Goe1 / Go1 / JCM 11833 / OCM 88) (Methanosarcina frisia)).